The chain runs to 466 residues: Soluble pyridine nucleotide transhydrogenase (466 aa).

36-45 (EKESSVGGGC) provides a ligand contact to FAD.

It belongs to the class-I pyridine nucleotide-disulfide oxidoreductase family. Requires FAD as cofactor.

Its subcellular location is the cytoplasm. It carries out the reaction NAD(+) + NADPH = NADH + NADP(+). Conversion of NADPH, generated by peripheral catabolic pathways, to NADH, which can enter the respiratory chain for energy generation. The protein is Soluble pyridine nucleotide transhydrogenase of Vibrio vulnificus (strain CMCP6).